The following is a 407-amino-acid chain: Na(+)-translocating NADH-quinone reductase subunit F (407 aa).

The helical transmembrane segment at 6–26 (IFLAIGMFTAIVLGLVAIILV) threads the bilayer. Residues 35–127 (GDVTIQINGE…DMQIRVPEEV (93 aa)) enclose the 2Fe-2S ferredoxin-type domain. [2Fe-2S] cluster contacts are provided by Cys70, Cys76, Cys79, and Cys111. Positions 130–269 (VKKWECTVES…YGPFGEFFAK (140 aa)) constitute an FAD-binding FR-type domain. A catalytic region spans residues 272 to 389 (EAEMVFIGGG…PMMNAAVIKM (118 aa)).

It belongs to the NqrF family. As to quaternary structure, composed of six subunits; NqrA, NqrB, NqrC, NqrD, NqrE and NqrF. [2Fe-2S] cluster is required as a cofactor. The cofactor is FAD.

It localises to the cell inner membrane. It carries out the reaction a ubiquinone + n Na(+)(in) + NADH + H(+) = a ubiquinol + n Na(+)(out) + NAD(+). Functionally, NQR complex catalyzes the reduction of ubiquinone-1 to ubiquinol by two successive reactions, coupled with the transport of Na(+) ions from the cytoplasm to the periplasm. The first step is catalyzed by NqrF, which accepts electrons from NADH and reduces ubiquinone-1 to ubisemiquinone by a one-electron transfer pathway. The chain is Na(+)-translocating NADH-quinone reductase subunit F from Pseudomonas aeruginosa (strain ATCC 15692 / DSM 22644 / CIP 104116 / JCM 14847 / LMG 12228 / 1C / PRS 101 / PAO1).